The primary structure comprises 339 residues: DNA-directed RNA polymerase subunit alpha (339 aa).

The interval Met-1 to Glu-233 is alpha N-terminal domain (alpha-NTD). Positions Lys-264 to Phe-339 are alpha C-terminal domain (alpha-CTD).

Belongs to the RNA polymerase alpha chain family. In terms of assembly, in plastids the minimal PEP RNA polymerase catalytic core is composed of four subunits: alpha, beta, beta', and beta''. When a (nuclear-encoded) sigma factor is associated with the core the holoenzyme is formed, which can initiate transcription.

It localises to the plastid. Its subcellular location is the chloroplast. The catalysed reaction is RNA(n) + a ribonucleoside 5'-triphosphate = RNA(n+1) + diphosphate. DNA-dependent RNA polymerase catalyzes the transcription of DNA into RNA using the four ribonucleoside triphosphates as substrates. This Australopyrum velutinum (Mountain wheat-grass) protein is DNA-directed RNA polymerase subunit alpha.